The following is a 400-amino-acid chain: Elongation factor Tu (400 aa).

Residues 10-209 (KPHVNIGTIG…EVDKYIPTPE (200 aa)) form the tr-type G domain. The G1 stretch occupies residues 19–26 (GHVDHGKT). A GTP-binding site is contributed by 19–26 (GHVDHGKT). Threonine 26 is a binding site for Mg(2+). Residues 60-64 (GITIN) form a G2 region. The tract at residues 81–84 (DCPG) is G3. Residues 81–85 (DCPGH) and 136–139 (NKAD) contribute to the GTP site. Residues 136-139 (NKAD) are G4. A G5 region spans residues 174–176 (SGL).

This sequence belongs to the TRAFAC class translation factor GTPase superfamily. Classic translation factor GTPase family. EF-Tu/EF-1A subfamily. Monomer.

It is found in the cytoplasm. The catalysed reaction is GTP + H2O = GDP + phosphate + H(+). Its function is as follows. GTP hydrolase that promotes the GTP-dependent binding of aminoacyl-tRNA to the A-site of ribosomes during protein biosynthesis. This is Elongation factor Tu from Heliobacterium modesticaldum (strain ATCC 51547 / Ice1).